The primary structure comprises 177 residues: uncharacterized protein (177 aa).

Over residues 100 to 115 (QVQPHQQTHQQSQQTH) the composition is skewed to low complexity. The disordered stretch occupies residues 100–135 (QVQPHQQTHQQSQQTHNKTVANSGDPPPPPPSQPNK). Residues 141 to 158 (WIVGMVIGVVVLYLLYRY) traverse the membrane as a helical segment.

The protein localises to the membrane. This is an uncharacterized protein from Aedes vexans (Inland floodwater mosquito).